Reading from the N-terminus, the 258-residue chain is Tryptophan synthase alpha chain (258 aa).

Catalysis depends on proton acceptor residues glutamate 47 and aspartate 58.

The protein belongs to the TrpA family. Tetramer of two alpha and two beta chains.

The enzyme catalyses (1S,2R)-1-C-(indol-3-yl)glycerol 3-phosphate + L-serine = D-glyceraldehyde 3-phosphate + L-tryptophan + H2O. The protein operates within amino-acid biosynthesis; L-tryptophan biosynthesis; L-tryptophan from chorismate: step 5/5. Functionally, the alpha subunit is responsible for the aldol cleavage of indoleglycerol phosphate to indole and glyceraldehyde 3-phosphate. This chain is Tryptophan synthase alpha chain, found in Bacillus cereus (strain ATCC 10987 / NRS 248).